The sequence spans 81 residues: Cytotoxin 1 (81 aa).

The signal sequence occupies residues 1-21 (MKTLLLTLVVVTIVCLDLGYT). 4 cysteine pairs are disulfide-bonded: C24/C42, C35/C59, C63/C74, and C75/C80.

The protein belongs to the three-finger toxin family. Short-chain subfamily. Type IA cytotoxin sub-subfamily. Monomer in solution; Homodimer and oligomer in the presence of negatively charged lipids forming a pore with a size ranging between 20 and 30 Angstroms. Expressed by the venom gland.

It is found in the secreted. The protein resides in the target cell membrane. In terms of biological role, basic protein that binds to cell membrane and depolarizes cardiomyocytes. It also shows lytic activities on many other cells, including red blood cells. Interaction with sulfatides in the cell membrane induces pore formation and cell internalization and is responsible for cytotoxicity in cardiomyocytes. It targets the mitochondrial membrane and induces mitochondrial swelling and fragmentation. It binds to the integrin alpha-V/beta-3 (ITGAV/ITGB3) with a moderate affinity and inhibits protein kinases C. It also binds with high affinity to heparin. It also causes skeletal muscle necrosis after intramuscular injection into mice. The polypeptide is Cytotoxin 1 (Naja atra (Chinese cobra)).